We begin with the raw amino-acid sequence, 262 residues long: tRNA pseudouridine synthase A (262 aa).

The Nucleophile role is filled by Asp-51. Residue Tyr-109 participates in substrate binding.

It belongs to the tRNA pseudouridine synthase TruA family. As to quaternary structure, homodimer.

The catalysed reaction is uridine(38/39/40) in tRNA = pseudouridine(38/39/40) in tRNA. Functionally, formation of pseudouridine at positions 38, 39 and 40 in the anticodon stem and loop of transfer RNAs. In Aliivibrio fischeri (strain ATCC 700601 / ES114) (Vibrio fischeri), this protein is tRNA pseudouridine synthase A.